The following is a 194-amino-acid chain: UPF0301 protein FTM_0963 (194 aa).

The protein belongs to the UPF0301 (AlgH) family.

This chain is UPF0301 protein FTM_0963, found in Francisella tularensis subsp. mediasiatica (strain FSC147).